We begin with the raw amino-acid sequence, 55 residues long: Serine protease inhibitor Kazal-type 1 (55 aa).

The Kazal-like domain maps to 2–55 (QGRDANCNYEFPGCPRNLEPVCGTDGNTYNNECLLCMENKKRDVPIRIQKDGPC). Cystine bridges form between cysteine 8–cysteine 37, cysteine 15–cysteine 34, and cysteine 23–cysteine 55.

It is found in the secreted. Serine protease inhibitor which exhibits anti-trypsin activity. In the pancreas, protects against trypsin-catalyzed premature activation of zymogens. Its function is as follows. In the male reproductive tract, binds to sperm heads where it modulates sperm capacitance by inhibiting calcium uptake and nitrogen oxide (NO) production. The chain is Serine protease inhibitor Kazal-type 1 (SPINK1) from Monodelphis domestica (Gray short-tailed opossum).